The chain runs to 240 residues: Sugar fermentation stimulation protein homolog (240 aa).

This sequence belongs to the SfsA family.

The sequence is that of Sugar fermentation stimulation protein homolog from Saccharolobus solfataricus (strain ATCC 35092 / DSM 1617 / JCM 11322 / P2) (Sulfolobus solfataricus).